The primary structure comprises 177 residues: Interleukin-25 (177 aa).

The N-terminal stretch at 1 to 32 (MRERPRLGEDSSLISLFLQVVAFLAMVMGTHT) is a signal peptide. The disordered stretch occupies residues 58–81 (PVPPLEPARPNRHPESCRASEDGP). Over residues 69-78 (RHPESCRASE) the composition is skewed to basic and acidic residues. Intrachain disulfides connect C110-C168 and C115-C170. An N-linked (GlcNAc...) asparagine glycan is attached at N136.

It belongs to the IL-17 family. In terms of tissue distribution, expressed at low levels in several tissues, including brain, kidney, lung, prostate, testis, spinal cord, adrenal gland, and trachea.

It is found in the secreted. Its function is as follows. Cytokine produced by various cells such as eosinophils, T-helper type 2 (Th2) cells or epithelial cells that plays a role in internal safety of adaptive immune responses by regulating cytokine production. Promotes and augments T-helper type 2 responses locally or systemically. Exerts its activity via its receptor composed of IL17RA and IL17RB for signal transduction. In turn, stimulates the JAK2-STAT5A pathway and promotes the secretion of type-2 associated cytokines including IL4, IL9 and IL13. Also induces the release of IL8, and IL6 from eosinophils through the combined activation of MAPK and NF-kappa-B pathways. Inhibits the differentiation of T-helper (Th17) cells via the production of IL4, IL5 and IL13. The sequence is that of Interleukin-25 (IL25) from Homo sapiens (Human).